The primary structure comprises 146 residues: Snaclec alboaggregin-B subunit beta (146 aa).

Positions 1 to 23 (MGRFIFGSFGLLVLFLSLSGTGA) are cleaved as a signal peptide. Residues 24 to 143 (DCPSDWSSYD…CSRTYPFVCK (120 aa)) enclose the C-type lectin domain. 3 disulfide bridges follow: cysteine 25–cysteine 36, cysteine 53–cysteine 142, and cysteine 119–cysteine 134.

The protein belongs to the snaclec family. Heterodimer of subunits alpha and beta; disulfide-linked. Expressed by the venom gland.

The protein resides in the secreted. Weakly agglutinates platelets at high doses by binding to GPIbalpha (GP1BA). The polypeptide is Snaclec alboaggregin-B subunit beta (Trimeresurus albolabris (White-lipped pit viper)).